The sequence spans 468 residues: Malate-2H(+)/Na(+)-lactate antiporter (468 aa).

A run of 12 helical transmembrane segments spans residues 9-29 (LFEI…FTVF), 30-50 (LDLP…LLGI), 73-93 (AVLI…GGVV), 96-116 (LIYY…TLII), 136-156 (IAMI…AGAI), 192-212 (LYLS…VGFM), 233-253 (TFDI…LLAM), 258-278 (MPVI…FQGM), 309-329 (IVGM…GGLL), 357-377 (LIVA…LILT), 405-425 (LTSG…ILGV), and 428-448 (FSYL…IIYG).

Belongs to the NhaC Na(+)/H(+) (TC 2.A.35) antiporter family.

It localises to the cell membrane. In terms of biological role, couples proton uptake and Na(+) efflux to the substrate-product malate/lactate antiport, in an electroneutral malate-2H(+)/Na(+)-lactate exchange. Plays a role in supporting growth to high density on malate at reduced protonmotive force. The protein is Malate-2H(+)/Na(+)-lactate antiporter (mleN) of Bacillus subtilis (strain 168).